A 215-amino-acid chain; its full sequence is Enolase-phosphatase E1 (215 aa).

2 residues coordinate Mg(2+): D11 and E13. Residues 117–118 (SS) and K151 contribute to the substrate site. D174 is a binding site for Mg(2+).

It belongs to the HAD-like hydrolase superfamily. MasA/MtnC family. As to quaternary structure, monomer. The cofactor is Mg(2+).

The protein localises to the cytoplasm. It is found in the nucleus. The enzyme catalyses 5-methylsulfanyl-2,3-dioxopentyl phosphate + H2O = 1,2-dihydroxy-5-(methylsulfanyl)pent-1-en-3-one + phosphate. The protein operates within amino-acid biosynthesis; L-methionine biosynthesis via salvage pathway; L-methionine from S-methyl-5-thio-alpha-D-ribose 1-phosphate: step 3/6. Its pathway is amino-acid biosynthesis; L-methionine biosynthesis via salvage pathway; L-methionine from S-methyl-5-thio-alpha-D-ribose 1-phosphate: step 4/6. Its function is as follows. Bifunctional enzyme that catalyzes the enolization of 2,3-diketo-5-methylthiopentyl-1-phosphate (DK-MTP-1-P) into the intermediate 2-hydroxy-3-keto-5-methylthiopentenyl-1-phosphate (HK-MTPenyl-1-P), which is then dephosphorylated to form the acireductone 1,2-dihydroxy-3-keto-5-methylthiopentene (DHK-MTPene). This is Enolase-phosphatase E1 (utr4) from Schizosaccharomyces japonicus (strain yFS275 / FY16936) (Fission yeast).